The chain runs to 371 residues: Putative glutamate--cysteine ligase 2 (371 aa).

This sequence belongs to the glutamate--cysteine ligase type 2 family. YbdK subfamily.

The enzyme catalyses L-cysteine + L-glutamate + ATP = gamma-L-glutamyl-L-cysteine + ADP + phosphate + H(+). Its function is as follows. ATP-dependent carboxylate-amine ligase which exhibits weak glutamate--cysteine ligase activity. This is Putative glutamate--cysteine ligase 2 from Paraburkholderia xenovorans (strain LB400).